Reading from the N-terminus, the 386-residue chain is Succinate--CoA ligase [ADP-forming] subunit beta (386 aa).

One can recognise an ATP-grasp domain in the interval 9-243; it reads KQLFRKYSIP…PAEDDPAEAE (235 aa). Residues Lys45, 52-54, Glu98, Val101, and Glu106 contribute to the ATP site; that span reads GRG. Positions 198 and 212 each coordinate Mg(2+). Residues Asn263 and 320–322 contribute to the substrate site; that span reads GIL.

This sequence belongs to the succinate/malate CoA ligase beta subunit family. As to quaternary structure, heterotetramer of two alpha and two beta subunits. Mg(2+) serves as cofactor.

The enzyme catalyses succinate + ATP + CoA = succinyl-CoA + ADP + phosphate. The catalysed reaction is GTP + succinate + CoA = succinyl-CoA + GDP + phosphate. The protein operates within carbohydrate metabolism; tricarboxylic acid cycle; succinate from succinyl-CoA (ligase route): step 1/1. Its function is as follows. Succinyl-CoA synthetase functions in the citric acid cycle (TCA), coupling the hydrolysis of succinyl-CoA to the synthesis of either ATP or GTP and thus represents the only step of substrate-level phosphorylation in the TCA. The beta subunit provides nucleotide specificity of the enzyme and binds the substrate succinate, while the binding sites for coenzyme A and phosphate are found in the alpha subunit. The polypeptide is Succinate--CoA ligase [ADP-forming] subunit beta (Desulfotalea psychrophila (strain LSv54 / DSM 12343)).